A 442-amino-acid polypeptide reads, in one-letter code: Probable D-serine dehydratase (442 aa).

An N6-(pyridoxal phosphate)lysine modification is found at Lys-111.

It belongs to the serine/threonine dehydratase family. DsdA subfamily. Requires pyridoxal 5'-phosphate as cofactor.

The enzyme catalyses D-serine = pyruvate + NH4(+). This is Probable D-serine dehydratase from Sinorhizobium medicae (strain WSM419) (Ensifer medicae).